The following is a 257-amino-acid chain: Protein UL133 (257 aa).

The next 2 helical transmembrane spans lie at W14–L34 and P45–I65. A disordered region spans residues P149–A232. Residues V164–E175 are compositionally biased toward pro residues. Residues K179–N193 show a composition bias toward basic residues. Over residues G214 to P228 the composition is skewed to pro residues.

It localises to the host Golgi apparatus membrane. This is Protein UL133 (UL133) from Human cytomegalovirus (strain Merlin) (HHV-5).